Here is a 329-residue protein sequence, read N- to C-terminus: UDP-sugar transporter sqv-7 (329 aa).

The next 9 helical transmembrane spans lie at 15 to 34, 41 to 63, 86 to 108, 129 to 151, 155 to 174, 187 to 209, 224 to 246, 253 to 275, and 280 to 302; these read SAVF…KILL, SFLF…AKMF, YFFN…FTVL, SKAV…IYDL, ALGY…LGVY, YGLM…QYTG, TSSV…YSLV, SALT…GMFS, and VFQW…YTYV.

This sequence belongs to the TPT transporter family. SLC35D subfamily.

It is found in the golgi apparatus membrane. In terms of biological role, acts as a transporter of UDP-glucuronic acid (UDP-GlcA), UDP-N-acetylgalactosamine (UDP-GalNAc) and UDP-galactose (UDP-Gal) from the cytoplasm into the Golgi lumen. Involved in the biosynthesis of glycoconjugates that play a pivotal role in development. Involved in the synthesis of chondroitin sulfate and heparan sulfate proteoglycans. Required for embryonic development. Involved in vulva epithelium invagination and embryonic development. Involved in the directed migration of hermaphrodite-specific neurons. The chain is UDP-sugar transporter sqv-7 (sqv-7) from Caenorhabditis elegans.